The primary structure comprises 127 residues: Large ribosomal subunit protein bL17 (127 aa).

Belongs to the bacterial ribosomal protein bL17 family. As to quaternary structure, part of the 50S ribosomal subunit. Contacts protein L32.

The sequence is that of Large ribosomal subunit protein bL17 from Legionella pneumophila (strain Corby).